Consider the following 23-residue polypeptide: Cysteine proteinase (23 aa).

Residues 1-10 (ADSLDWREKG) show a composition bias toward basic and acidic residues. The segment at 1 to 23 (ADSLDWREKGVVNSIKDQAQXGS) is disordered.

The protein belongs to the peptidase C1 family.

This Tritrichomonas foetus (Trichomonas foetus) protein is Cysteine proteinase.